The sequence spans 176 residues: Ribosome maturation factor RimM (176 aa).

Residues 97 to 176 enclose the PRC barrel domain; it reads GDEFYWRELV…TIQVDWDPSF (80 aa).

Belongs to the RimM family. In terms of assembly, binds ribosomal protein uS19.

The protein localises to the cytoplasm. Its function is as follows. An accessory protein needed during the final step in the assembly of 30S ribosomal subunit, possibly for assembly of the head region. Essential for efficient processing of 16S rRNA. May be needed both before and after RbfA during the maturation of 16S rRNA. It has affinity for free ribosomal 30S subunits but not for 70S ribosomes. The sequence is that of Ribosome maturation factor RimM from Pseudoalteromonas atlantica (strain T6c / ATCC BAA-1087).